Reading from the N-terminus, the 205-residue chain is GTP cyclohydrolase-2 (205 aa).

49-53 serves as a coordination point for GTP; sequence RVHSE. C54, C65, and C67 together coordinate Zn(2+). GTP contacts are provided by residues Q70, 92–94, and T114; that span reads EGR. D126 functions as the Proton acceptor in the catalytic mechanism. The active-site Nucleophile is R128. GTP-binding residues include T149 and K154.

Belongs to the GTP cyclohydrolase II family. Zn(2+) is required as a cofactor.

The catalysed reaction is GTP + 4 H2O = 2,5-diamino-6-hydroxy-4-(5-phosphoribosylamino)-pyrimidine + formate + 2 phosphate + 3 H(+). It functions in the pathway cofactor biosynthesis; riboflavin biosynthesis; 5-amino-6-(D-ribitylamino)uracil from GTP: step 1/4. In terms of biological role, catalyzes the conversion of GTP to 2,5-diamino-6-ribosylamino-4(3H)-pyrimidinone 5'-phosphate (DARP), formate and pyrophosphate. The polypeptide is GTP cyclohydrolase-2 (Pseudomonas syringae pv. tomato (strain ATCC BAA-871 / DC3000)).